The primary structure comprises 60 residues: Putative potassium channel blocker TXKS1 (60 aa).

The N-terminal stretch at 1-28 (MNRLTTIILMLIVINVIMDDISESKVAA) is a signal peptide. Intrachain disulfides connect cysteine 32–cysteine 49, cysteine 35–cysteine 55, and cysteine 39–cysteine 57. Residue lysine 59 is modified to Lysine amide.

In terms of tissue distribution, expressed by the venom gland.

It is found in the secreted. Functionally, inhibits potassium channels. In Olivierus martensii (Manchurian scorpion), this protein is Putative potassium channel blocker TXKS1.